We begin with the raw amino-acid sequence, 187 residues long: Fibroblast growth factor 4A (187 aa).

The first 22 residues, 1-22 (MTVPSALVPILLLGTAAVMVQC), serve as a signal peptide directing secretion.

Belongs to the heparin-binding growth factors family.

The protein resides in the secreted. Its function is as follows. Plays an important role in the regulation of embryonic development, cell proliferation, and cell differentiation. Good candidate for an inducing factor with possible roles both in mesoderm induction at the blastula stage and in the formation of the anteroposterior axis at the gastrula stage. This Xenopus laevis (African clawed frog) protein is Fibroblast growth factor 4A (fgf4-a).